Reading from the N-terminus, the 114-residue chain is Small ribosomal subunit protein bS6 (114 aa).

This sequence belongs to the bacterial ribosomal protein bS6 family.

Functionally, binds together with bS18 to 16S ribosomal RNA. This Bacteroides thetaiotaomicron (strain ATCC 29148 / DSM 2079 / JCM 5827 / CCUG 10774 / NCTC 10582 / VPI-5482 / E50) protein is Small ribosomal subunit protein bS6.